The following is a 276-amino-acid chain: uncharacterized protein (276 aa).

ATP is bound at residue 15-22 (GKGGVGKS). 4Fe-4S ferredoxin-type domains lie at 68-96 (EIYE…DFKI) and 92-121 (GDFK…PIKR). [4Fe-4S] cluster is bound by residues C76, C79, C82, C86, C101, C104, C107, and C111.

This is an uncharacterized protein from Methanocaldococcus jannaschii (strain ATCC 43067 / DSM 2661 / JAL-1 / JCM 10045 / NBRC 100440) (Methanococcus jannaschii).